A 129-amino-acid chain; its full sequence is Lysozyme C (129 aa).

In terms of domain architecture, C-type lysozyme spans 1–129; sequence KVYGRCELAA…VNAWTRGCRL (129 aa). 4 disulfides stabilise this stretch: Cys-6/Cys-127, Cys-30/Cys-115, Cys-64/Cys-80, and Cys-76/Cys-94. Residues Glu-35 and Asp-52 contribute to the active site.

The protein belongs to the glycosyl hydrolase 22 family. In terms of assembly, monomer.

It localises to the secreted. The enzyme catalyses Hydrolysis of (1-&gt;4)-beta-linkages between N-acetylmuramic acid and N-acetyl-D-glucosamine residues in a peptidoglycan and between N-acetyl-D-glucosamine residues in chitodextrins.. Its function is as follows. Lysozymes have primarily a bacteriolytic function; those in tissues and body fluids are associated with the monocyte-macrophage system and enhance the activity of immunoagents. This chain is Lysozyme C (LYZ), found in Syrmaticus soemmerringii (Copper pheasant).